The sequence spans 183 residues: Ribose 1,5-bisphosphate phosphokinase PhnN (183 aa).

Belongs to the ribose 1,5-bisphosphokinase family.

The enzyme catalyses alpha-D-ribose 1,5-bisphosphate + ATP = 5-phospho-alpha-D-ribose 1-diphosphate + ADP. Its pathway is metabolic intermediate biosynthesis; 5-phospho-alpha-D-ribose 1-diphosphate biosynthesis; 5-phospho-alpha-D-ribose 1-diphosphate from D-ribose 5-phosphate (route II): step 3/3. Its function is as follows. Catalyzes the phosphorylation of ribose 1,5-bisphosphate to 5-phospho-D-ribosyl alpha-1-diphosphate (PRPP). The protein is Ribose 1,5-bisphosphate phosphokinase PhnN of Azotobacter vinelandii (strain DJ / ATCC BAA-1303).